We begin with the raw amino-acid sequence, 279 residues long: MTTRIDTKFAELKAEGRPALVTYFMGGDPDLETSLKVMKALPKAGADVIELGMPFSDPMADGPAIQAAGLRALNAGQTLAKTLHMAAEFRKEDNTTPIVMMGYYNPIYIYGVERFLADAKASGVDGLIVVDLPSEMDAELCIPAMKAGINFIRLTTPTTDDKRLPKVLHNSSGFVYYVSMNGITGSAIADTAKVGEAVRHIKKSTDLPICVGFGVKTPEQAAAIATHADGVVVGTAIVNAIAGELDENGKAKGDPVAAATRLVHALAESVRATRLEAAQ.

Residues Glu-50 and Asp-61 each act as proton acceptor in the active site.

The protein belongs to the TrpA family. As to quaternary structure, tetramer of two alpha and two beta chains.

It carries out the reaction (1S,2R)-1-C-(indol-3-yl)glycerol 3-phosphate + L-serine = D-glyceraldehyde 3-phosphate + L-tryptophan + H2O. It functions in the pathway amino-acid biosynthesis; L-tryptophan biosynthesis; L-tryptophan from chorismate: step 5/5. Its function is as follows. The alpha subunit is responsible for the aldol cleavage of indoleglycerol phosphate to indole and glyceraldehyde 3-phosphate. In Brucella anthropi (strain ATCC 49188 / DSM 6882 / CCUG 24695 / JCM 21032 / LMG 3331 / NBRC 15819 / NCTC 12168 / Alc 37) (Ochrobactrum anthropi), this protein is Tryptophan synthase alpha chain.